A 263-amino-acid polypeptide reads, in one-letter code: 3-deoxy-manno-octulosonate cytidylyltransferase (263 aa).

Belongs to the KdsB family.

Its subcellular location is the cytoplasm. It catalyses the reaction 3-deoxy-alpha-D-manno-oct-2-ulosonate + CTP = CMP-3-deoxy-beta-D-manno-octulosonate + diphosphate. It functions in the pathway nucleotide-sugar biosynthesis; CMP-3-deoxy-D-manno-octulosonate biosynthesis; CMP-3-deoxy-D-manno-octulosonate from 3-deoxy-D-manno-octulosonate and CTP: step 1/1. The protein operates within bacterial outer membrane biogenesis; lipopolysaccharide biosynthesis. In terms of biological role, activates KDO (a required 8-carbon sugar) for incorporation into bacterial lipopolysaccharide in Gram-negative bacteria. The sequence is that of 3-deoxy-manno-octulosonate cytidylyltransferase from Burkholderia cenocepacia (strain ATCC BAA-245 / DSM 16553 / LMG 16656 / NCTC 13227 / J2315 / CF5610) (Burkholderia cepacia (strain J2315)).